A 151-amino-acid chain; its full sequence is Ribonuclease H (151 aa).

One can recognise an RNase H type-1 domain in the interval 1–141; sequence MKNVIIYTDG…ADALANRGID (141 aa). The Mg(2+) site is built by Asp-9, Glu-47, Asp-69, and Asp-133.

The protein belongs to the RNase H family. Monomer. The cofactor is Mg(2+).

Its subcellular location is the cytoplasm. It catalyses the reaction Endonucleolytic cleavage to 5'-phosphomonoester.. Functionally, endonuclease that specifically degrades the RNA of RNA-DNA hybrids. The protein is Ribonuclease H of Alcanivorax borkumensis (strain ATCC 700651 / DSM 11573 / NCIMB 13689 / SK2).